The chain runs to 225 residues: Protein NrfC homolog (225 aa).

The tat-type signal signal peptide spans 1–28; the sequence is MTVCSRRNFVSGMGAVILMTGTSLPAFA. 4Fe-4S ferredoxin-type domains lie at 39 to 67, 85 to 116, and 118 to 147; these read YAMI…VPEG, QEYE…IDKE, and GIVD…IHPI. 16 residues coordinate [4Fe-4S] cluster: cysteine 48, cysteine 51, cysteine 54, cysteine 58, cysteine 94, cysteine 97, cysteine 102, cysteine 106, cysteine 127, cysteine 130, cysteine 133, cysteine 137, cysteine 154, cysteine 157, cysteine 170, and cysteine 174.

Post-translationally, predicted to be exported by the Tat system. The position of the signal peptide cleavage has not been experimentally proven.

In terms of biological role, probably involved in the transfer of electrons from the quinone pool to the type-c cytochromes. This Haemophilus influenzae (strain ATCC 51907 / DSM 11121 / KW20 / Rd) protein is Protein NrfC homolog (nrfC).